A 107-amino-acid chain; its full sequence is Class I hydrophobin 3 (107 aa).

Residues 1 to 18 form the signal peptide; the sequence is MQFKVLAALVIGATLAAA. Disulfide bonds link Cys-26–Cys-86, Cys-33–Cys-80, Cys-34–Cys-67, and Cys-87–Cys-100. N-linked (GlcNAc...) asparagine glycosylation is found at Asn-35 and Asn-89.

It belongs to the fungal hydrophobin family. As to quaternary structure, self-assembles to form functional amyloid fibrils called rodlets. Self-assembly into fibrillar rodlets occurs spontaneously at hydrophobic:hydrophilic interfaces and the rodlets further associate laterally to form amphipathic monolayers.

It localises to the secreted. The protein resides in the cell wall. In terms of biological role, aerial growth, conidiation, and dispersal of filamentous fungi in the environment rely upon a capability of their secreting small amphipathic proteins called hydrophobins (HPBs) with low sequence identity. Class I can self-assemble into an outermost layer of rodlet bundles on aerial cell surfaces, conferring cellular hydrophobicity that supports fungal growth, development and dispersal; whereas Class II form highly ordered films at water-air interfaces through intermolecular interactions but contribute nothing to the rodlet structure. Pnh3 is a class I hydrophobin that might be involved in the attachment of the hydrophilic wall of hyphae to the hydrophobic surface of wood under inorganic phosphate (Pi)-deficient conditions and enable the mycelium to degrade efficiently the components of wood and to acquire nutrients containing Pi. The chain is Class I hydrophobin 3 from Pholiota nameko.